The following is a 257-amino-acid chain: MVVVSVPAEVTVILLDIEGTTTPIAFVKDVLFPYIKENVKEYLQTHWEEEECQQDVSLLRKQAEEDAHLDGAVPIPVASGSDLQQMIQAVVDNVYWQMSHDRKTTALKQLQGHMWKAAFTAGRMKAEFFADVVPAVRRWREAGMKVYIYSSGSVEAQKLLFGHSTEGDILELIDGHFDTKIGHKVDSESYRKIADSIGCSTNNILFLTDVTVEASAAEEADVHVAVVVRPGNAGLTDDEKTYYNLITSFSELYLPST.

Positions 16 and 18 each coordinate Mg(2+). Residues Ser150–Ser151 and Lys184 contribute to the substrate site. Asp209 provides a ligand contact to Mg(2+).

Belongs to the HAD-like hydrolase superfamily. MasA/MtnC family. Monomer. Mg(2+) serves as cofactor.

It is found in the cytoplasm. The protein resides in the nucleus. It carries out the reaction 5-methylsulfanyl-2,3-dioxopentyl phosphate + H2O = 1,2-dihydroxy-5-(methylsulfanyl)pent-1-en-3-one + phosphate. It functions in the pathway amino-acid biosynthesis; L-methionine biosynthesis via salvage pathway; L-methionine from S-methyl-5-thio-alpha-D-ribose 1-phosphate: step 3/6. Its pathway is amino-acid biosynthesis; L-methionine biosynthesis via salvage pathway; L-methionine from S-methyl-5-thio-alpha-D-ribose 1-phosphate: step 4/6. Bifunctional enzyme that catalyzes the enolization of 2,3-diketo-5-methylthiopentyl-1-phosphate (DK-MTP-1-P) into the intermediate 2-hydroxy-3-keto-5-methylthiopentenyl-1-phosphate (HK-MTPenyl-1-P), which is then dephosphorylated to form the acireductone 1,2-dihydroxy-3-keto-5-methylthiopentene (DHK-MTPene). The chain is Enolase-phosphatase E1 (Enoph1) from Mus musculus (Mouse).